Here is a 150-residue protein sequence, read N- to C-terminus: UPF0756 membrane protein NTHI1233 (150 aa).

4 helical membrane passes run 1–21 (MTLQ…LGVL), 52–72 (YGVK…LVSG), 81–101 (GFLS…AWLA), and 123–143 (IIGV…AGIL).

It belongs to the UPF0756 family.

The protein localises to the cell membrane. This Haemophilus influenzae (strain 86-028NP) protein is UPF0756 membrane protein NTHI1233.